Here is an 86-residue protein sequence, read N- to C-terminus: MPKSDIHPTWYPEAKVICNGEVVMTTGATQPEIQVDVWSGNHPFFTGTQKILDTEGRVDRFMRKYRMASSDSSEQKDKSSEEKKES.

The segment at tyrosine 65–serine 86 is disordered. Residues serine 73–serine 86 show a composition bias toward basic and acidic residues.

Belongs to the bacterial ribosomal protein bL31 family. Type A subfamily. As to quaternary structure, part of the 50S ribosomal subunit.

Functionally, binds the 23S rRNA. The protein is Large ribosomal subunit protein bL31 of Prochlorococcus marinus (strain NATL1A).